Consider the following 140-residue polypeptide: Large ribosomal subunit protein uL16 (140 aa).

This sequence belongs to the universal ribosomal protein uL16 family. As to quaternary structure, part of the 50S ribosomal subunit.

Functionally, binds 23S rRNA and is also seen to make contacts with the A and possibly P site tRNAs. This is Large ribosomal subunit protein uL16 from Syntrophus aciditrophicus (strain SB).